An 89-amino-acid chain; its full sequence is Pigment-dispersing hormone peptides (89 aa).

The signal sequence occupies residues 1–22 (MTAMAVSGKLLTALVLSTYILG). Residue A86 is modified to Alanine amide.

It belongs to the arthropod PDH family.

The protein localises to the secreted. Its function is as follows. Capable of inducing pigment dispersion in the chromatophores of the fiddler crab Uca pugilator. The protein is Pigment-dispersing hormone peptides of Romalea microptera (Eastern lubber grasshopper).